The chain runs to 379 residues: METCPVLQKETLFHTEVYAYRIPALLYLKKQKTLLAFAEKRASRTDEHAELIVLRRGSYNGATNHVKWQPEEVVTQAQLEGHRSMNPCPLYDKQTKTLFLFFIAVPGRVSEQHQLQTRVNVTRLCRVTSTDYGMNWSPVQDLTETTIGSTHQDWATFAVGPGHCLQLRNRAGSLLVPAYAYRKLHPVHKPTPFAFCFISLDHGHTWELGNFVSENSLECQVAEVGTGAHRVVYLNARSFIGARVQAQSPNDGLDFQDNQVVSKLVEPPHGCHGSVVAFHSPTSKPDCLRHVAAYTHPTDSRNRTNLGVYLNQTPLDPTAWSEPTLLATGTCAYSDLQIWGLGPDGSPQFGCLYESGNYDEIIFLMFTLKQAFPTVHGAQ.

The FRIP motif signature appears at 20–23 (YRIP). Substrate-binding residues include Arg21 and Arg41. The Proton acceptor role is filled by Asp46. A BNR 1 repeat occupies 127–138 (VTSTDYGMNWSP). Tyr179 and Tyr181 together coordinate substrate. One copy of the BNR 2 repeat lies at 197 to 208 (FISLDHGHTWEL). Substrate-binding residues include Glu218, Arg237, and Arg303. Tyr333 acts as the Nucleophile in catalysis. The active site involves Glu354.

It belongs to the glycosyl hydrolase 33 family. In terms of tissue distribution, detected in skeletal muscle.

The protein localises to the cytoplasm. It localises to the cytosol. The enzyme catalyses Hydrolysis of alpha-(2-&gt;3)-, alpha-(2-&gt;6)-, alpha-(2-&gt;8)- glycosidic linkages of terminal sialic acid residues in oligosaccharides, glycoproteins, glycolipids, colominic acid and synthetic substrates.. It carries out the reaction a ganglioside GD1a + H2O = a ganglioside GM1 + N-acetylneuraminate. The catalysed reaction is a ganglioside GM1 + H2O = a ganglioside GA1 + N-acetylneuraminate. It catalyses the reaction a ganglioside GT1b + H2O = a ganglioside GD1b + N-acetylneuraminate. The enzyme catalyses a ganglioside GD1b + H2O = a ganglioside GM1 + N-acetylneuraminate. It carries out the reaction a ganglioside GD3 + H2O = a ganglioside GM3 + N-acetylneuraminate. The catalysed reaction is a ganglioside GM3 + H2O = a beta-D-galactosyl-(1-&gt;4)-beta-D-glucosyl-(1&lt;-&gt;1)-ceramide + N-acetylneuraminate. It catalyses the reaction a ganglioside GM2 + H2O = a ganglioside GA2 + N-acetylneuraminate. The enzyme catalyses a neolactoside IV(3)-alpha-NeuAc-nLc4Cer(d18:1(4E)) + H2O = a neolactoside nLc4Cer(d18:1(4E)) + N-acetylneuraminate. It carries out the reaction N-acetyl-alpha-neuraminosyl-(2-&gt;3)-beta-D-galactosyl-(1-&gt;4)-D-glucose + H2O = lactose + N-acetylneuraminate. Exo-alpha-sialidase that catalyzes the hydrolytic cleavage of the terminal sialic acid (N-acetylneuraminic acid, Neu5Ac) of a glycan moiety in the catabolism of glycolipids, glycoproteins and oligosacharides. Recognizes sialyl linkage positions of the glycan moiety as well as the supramolecular organization of the sialoglycoconjugate. Displays preference for alpha-(2-&gt;3)-sialylated GD1a and GT1B gangliosides over alpha-(2-&gt;8)-sialylated GD1b, in both monomeric forms and micelles. Hydrolyzes monomeric GM1 ganglioside, but has no activity toward the miscellar form. Has lower sialidase activity for glycoproteins such as fetuin and TF/transferrin that carry a mixture of alpha-(2-&gt;3) and alpha-(2-&gt;6)-sialyl linkages. Cleaves milk oligosaccharide alpha-(2-&gt;3)-sialyllactose, but is inactive toward alpha-(2-&gt;6)-sialyllactose isomer. Has no activity toward colominic acid, a homomer of alpha-(2-&gt;8)-linked Neu5Ac residues. The protein is Sialidase-2 (Neu2) of Rattus norvegicus (Rat).